A 283-amino-acid polypeptide reads, in one-letter code: 4-diphosphocytidyl-2-C-methyl-D-erythritol kinase (283 aa).

Lys-10 is an active-site residue. Residue 95–105 (PVAAGLGGGSS) coordinates ATP. Asp-137 is a catalytic residue.

This sequence belongs to the GHMP kinase family. IspE subfamily.

It carries out the reaction 4-CDP-2-C-methyl-D-erythritol + ATP = 4-CDP-2-C-methyl-D-erythritol 2-phosphate + ADP + H(+). Its pathway is isoprenoid biosynthesis; isopentenyl diphosphate biosynthesis via DXP pathway; isopentenyl diphosphate from 1-deoxy-D-xylulose 5-phosphate: step 3/6. Functionally, catalyzes the phosphorylation of the position 2 hydroxy group of 4-diphosphocytidyl-2C-methyl-D-erythritol. In Limosilactobacillus fermentum (strain NBRC 3956 / LMG 18251) (Lactobacillus fermentum), this protein is 4-diphosphocytidyl-2-C-methyl-D-erythritol kinase.